Reading from the N-terminus, the 729-residue chain is Phosphoribosylformylglycinamidine synthase subunit PurL (729 aa).

His-54 is a catalytic residue. ATP is bound by residues Tyr-57 and Lys-96. Residue Glu-98 coordinates Mg(2+). Substrate is bound by residues Ser-99–His-102 and Arg-121. The active-site Proton acceptor is His-100. Position 122 (Asp-122) interacts with Mg(2+). Gln-245 serves as a coordination point for substrate. Asp-273 contributes to the Mg(2+) binding site. Substrate is bound at residue Glu-317–Gln-319. Residues Asp-495 and Gly-532 each coordinate ATP. Mg(2+) is bound at residue Asn-533. Ser-535 provides a ligand contact to substrate.

Belongs to the FGAMS family. In terms of assembly, monomer. Part of the FGAM synthase complex composed of 1 PurL, 1 PurQ and 2 PurS subunits.

Its subcellular location is the cytoplasm. The catalysed reaction is N(2)-formyl-N(1)-(5-phospho-beta-D-ribosyl)glycinamide + L-glutamine + ATP + H2O = 2-formamido-N(1)-(5-O-phospho-beta-D-ribosyl)acetamidine + L-glutamate + ADP + phosphate + H(+). Its pathway is purine metabolism; IMP biosynthesis via de novo pathway; 5-amino-1-(5-phospho-D-ribosyl)imidazole from N(2)-formyl-N(1)-(5-phospho-D-ribosyl)glycinamide: step 1/2. Functionally, part of the phosphoribosylformylglycinamidine synthase complex involved in the purines biosynthetic pathway. Catalyzes the ATP-dependent conversion of formylglycinamide ribonucleotide (FGAR) and glutamine to yield formylglycinamidine ribonucleotide (FGAM) and glutamate. The FGAM synthase complex is composed of three subunits. PurQ produces an ammonia molecule by converting glutamine to glutamate. PurL transfers the ammonia molecule to FGAR to form FGAM in an ATP-dependent manner. PurS interacts with PurQ and PurL and is thought to assist in the transfer of the ammonia molecule from PurQ to PurL. The protein is Phosphoribosylformylglycinamidine synthase subunit PurL of Staphylococcus aureus (strain Mu3 / ATCC 700698).